A 347-amino-acid chain; its full sequence is Transcription factor EC (347 aa).

The tract at residues 1–119 (MTLDHQIINP…GLTSASCPSS (119 aa)) is necessary for transcriptional transactivation. The bHLH domain maps to 139–192 (QKKDNHNLIERRRRYNINYRIKELGTLIPKSNDPDMRWNKGTILKASVEYIKWL). The segment at 271 to 347 (PSPEFCDQAI…SFSSDDGDEL (77 aa)) is necessary for transcriptional transactivation. A disordered region spans residues 319–347 (DPLLSATSPAVSKESSRRSSFSSDDGDEL). The span at 326-341 (SPAVSKESSRRSSFSS) shows a compositional bias: low complexity.

Belongs to the MiT/TFE family. Homodimer. Forms heterodimers with MITF and TFE3. Interacts with MITF.

The protein resides in the nucleus. Functionally, transcriptional regulator that acts as a repressor or an activator. Acts as a transcriptional repressor on minimal promoter containing element F (that includes an E-box sequence). Binds to element F in an E-box sequence-specific manner. Acts as a transcriptional transactivator on the proximal promoter region of the tartrate-resistant acid phosphatase (TRAP) E-box containing promoter. Collaborates with MITF in target gene activation. Acts as a transcriptional repressor on minimal promoter containing mu E3 enhancer sequence. Binds to mu E3 DNA sequence of the immunoglobulin heavy-chain gene enhancer. Binds DNA in a homo- or heterodimeric form. In Pan troglodytes (Chimpanzee), this protein is Transcription factor EC (TFEC).